The sequence spans 261 residues: Cytochrome c oxidase subunit 3 (261 aa).

The Mitochondrial matrix segment spans residues 1–15 (MTHQTHAYHMVNPSP). The helical transmembrane segment at 16–34 (WPLTGALSALLMTSGLIMW) threads the bilayer. Topologically, residues 35–40 (FHFNST) are mitochondrial intermembrane. A helical transmembrane segment spans residues 41–66 (ILLMLGLTTNMLTMYQWWRDIIREST). At 67–72 (FQGHHT) the chain is on the mitochondrial matrix side. A helical membrane pass occupies residues 73–105 (PTVQKGLRYGMILFIISEVLFFTGFFWAFYHSS). Over 106–128 (LAPTPELGGCWPPTGIHPLNPLE) the chain is Mitochondrial intermembrane. The chain crosses the membrane as a helical span at residues 129 to 152 (VPLLNTSVLLASGVSITWAHHSLM). Residues 153 to 155 (EGN) are Mitochondrial matrix-facing. Residues 156–183 (RNHMLQALFITIALGVYFTLLQASEYYE) traverse the membrane as a helical segment. Topologically, residues 184–190 (APFTISD) are mitochondrial intermembrane. The helical transmembrane segment at 191–223 (GVYGSTFFVATGFHGLHVIIGSTFLIVCFFRQL) threads the bilayer. Over 224–232 (KFHFTSSHH) the chain is Mitochondrial matrix. A helical transmembrane segment spans residues 233 to 256 (FGFEAAAWYWHFVDVVWLFLYVSI). Over 257–261 (YWWGS) the chain is Mitochondrial intermembrane.

Belongs to the cytochrome c oxidase subunit 3 family. As to quaternary structure, component of the cytochrome c oxidase (complex IV, CIV), a multisubunit enzyme composed of 14 subunits. The complex is composed of a catalytic core of 3 subunits MT-CO1, MT-CO2 and MT-CO3, encoded in the mitochondrial DNA, and 11 supernumerary subunits COX4I, COX5A, COX5B, COX6A, COX6B, COX6C, COX7A, COX7B, COX7C, COX8 and NDUFA4, which are encoded in the nuclear genome. The complex exists as a monomer or a dimer and forms supercomplexes (SCs) in the inner mitochondrial membrane with NADH-ubiquinone oxidoreductase (complex I, CI) and ubiquinol-cytochrome c oxidoreductase (cytochrome b-c1 complex, complex III, CIII), resulting in different assemblies (supercomplex SCI(1)III(2)IV(1) and megacomplex MCI(2)III(2)IV(2)).

Its subcellular location is the mitochondrion inner membrane. It catalyses the reaction 4 Fe(II)-[cytochrome c] + O2 + 8 H(+)(in) = 4 Fe(III)-[cytochrome c] + 2 H2O + 4 H(+)(out). Component of the cytochrome c oxidase, the last enzyme in the mitochondrial electron transport chain which drives oxidative phosphorylation. The respiratory chain contains 3 multisubunit complexes succinate dehydrogenase (complex II, CII), ubiquinol-cytochrome c oxidoreductase (cytochrome b-c1 complex, complex III, CIII) and cytochrome c oxidase (complex IV, CIV), that cooperate to transfer electrons derived from NADH and succinate to molecular oxygen, creating an electrochemical gradient over the inner membrane that drives transmembrane transport and the ATP synthase. Cytochrome c oxidase is the component of the respiratory chain that catalyzes the reduction of oxygen to water. Electrons originating from reduced cytochrome c in the intermembrane space (IMS) are transferred via the dinuclear copper A center (CU(A)) of subunit 2 and heme A of subunit 1 to the active site in subunit 1, a binuclear center (BNC) formed by heme A3 and copper B (CU(B)). The BNC reduces molecular oxygen to 2 water molecules using 4 electrons from cytochrome c in the IMS and 4 protons from the mitochondrial matrix. The protein is Cytochrome c oxidase subunit 3 (MT-CO3) of Aepyceros melampus (Impala).